Reading from the N-terminus, the 683-residue chain is UvrABC system protein B (683 aa).

A disordered region spans residues 1–29 (MTDTGPLQPDRPDLDRPLSVDAPFEPAGD). The Helicase ATP-binding domain maps to 39-417 (AGFESGAEKQ…PGDYERDHSE (379 aa)). 52-59 (GVTGSGKT) provides a ligand contact to ATP. The Beta-hairpin signature appears at 105-128 (YYDYYQPEAYVEQTDTYIDKDMSI). One can recognise a Helicase C-terminal domain in the interval 442–604 (QVEDLIERIQ…EPRTIEKPVS (163 aa)). The segment covering 587–603 (EFNAEHGHEPRTIEKPV) has biased composition (basic and acidic residues). The disordered stretch occupies residues 587–620 (EFNAEHGHEPRTIEKPVSETNLPGSSTDTDGVAD). Polar residues predominate over residues 604 to 615 (SETNLPGSSTDT). The 36-residue stretch at 630 to 665 (EQLIERLETRMQEAADNLEFELAADIRDRIRELRET) folds into the UVR domain.

Belongs to the UvrB family. As to quaternary structure, forms a heterotetramer with UvrA during the search for lesions. Interacts with UvrC in an incision complex.

The protein localises to the cytoplasm. Functionally, the UvrABC repair system catalyzes the recognition and processing of DNA lesions. A damage recognition complex composed of 2 UvrA and 2 UvrB subunits scans DNA for abnormalities. Upon binding of the UvrA(2)B(2) complex to a putative damaged site, the DNA wraps around one UvrB monomer. DNA wrap is dependent on ATP binding by UvrB and probably causes local melting of the DNA helix, facilitating insertion of UvrB beta-hairpin between the DNA strands. Then UvrB probes one DNA strand for the presence of a lesion. If a lesion is found the UvrA subunits dissociate and the UvrB-DNA preincision complex is formed. This complex is subsequently bound by UvrC and the second UvrB is released. If no lesion is found, the DNA wraps around the other UvrB subunit that will check the other stand for damage. This chain is UvrABC system protein B, found in Natronomonas pharaonis (strain ATCC 35678 / DSM 2160 / CIP 103997 / JCM 8858 / NBRC 14720 / NCIMB 2260 / Gabara) (Halobacterium pharaonis).